An 802-amino-acid polypeptide reads, in one-letter code: Leucine--tRNA ligase (802 aa).

The 'HIGH' region signature appears at 40-51; that stretch reads PYPSGAGLHVGH. Positions 576–580 match the 'KMSKS' region motif; it reads KMSKS. K579 contributes to the ATP binding site.

The protein belongs to the class-I aminoacyl-tRNA synthetase family.

It is found in the cytoplasm. The enzyme catalyses tRNA(Leu) + L-leucine + ATP = L-leucyl-tRNA(Leu) + AMP + diphosphate. The chain is Leucine--tRNA ligase from Bacillus cereus (strain B4264).